We begin with the raw amino-acid sequence, 926 residues long: Storkhead-box protein 2 (926 aa).

Disordered regions lie at residues 1-32 (MKKT…RSEK), 338-393 (EEEK…DIPG), 452-529 (EMPF…SYID), 564-586 (KEPS…PSYG), 633-693 (VKKL…SLDK), 723-802 (LLKS…VGTM), and 823-926 (TLLT…VTSV). Residues 18-32 (FSDRASDRMRSRSEK) show a composition bias toward basic and acidic residues. Positions 353-378 (HSGRSKKSRTHRKSHGKSRSHSKTRV) are enriched in basic residues. Over residues 379–393 (SKGDPSDGSHLDIPG) the composition is skewed to basic and acidic residues. Positions 463 to 472 (SHSKVHRSHS) are enriched in basic residues. A compositionally biased stretch (basic and acidic residues) spans 473–495 (HTQDRRSRNERSNKAKERSRSMD). The segment covering 518–529 (QDDQTPSQSYID) has biased composition (polar residues). 2 stretches are compositionally biased toward basic and acidic residues: residues 633–658 (VKKL…EESP) and 684–693 (HSAEPSSLDK). The span at 746–769 (LGTSAAQAMPPSQRQQEPGGNQEA) shows a compositional bias: polar residues. Over residues 785–799 (GANKNAEEEKNRDDV) the composition is skewed to basic and acidic residues. Composition is skewed to polar residues over residues 847 to 884 (MDSS…QNPA) and 914 to 926 (KPSN…VTSV).

The polypeptide is Storkhead-box protein 2 (Stox2) (Mus musculus (Mouse)).